Consider the following 701-residue polypeptide: Triadin (701 aa).

The disordered stretch occupies residues 1–28; the sequence is MTEITAEGNASTTTTVIDSKNGSVPKSP. Residues 1-47 are Cytoplasmic-facing; the sequence is MTEITAEGNASTTTTVIDSKNGSVPKSPGKVLKRTVTEDIVTTFSSP. Positions 8–24 are enriched in polar residues; sequence GNASTTTTVIDSKNGSV. A helical transmembrane segment spans residues 48–68; sequence AAWLLVIALIITWSAVAVVMF. The Lumenal portion of the chain corresponds to 69-701; it reads DLVDYKNFSA…SSPGQKQQGQ (633 aa). A glycan (N-linked (GlcNAc...) asparagine) is linked at N75. The segment covering 117–130 has biased composition (acidic residues); it reads DGDEDDDDGDEDTD. Disordered regions lie at residues 117-256, 273-654, and 676-701; these read DGDE…KHEQ, GDLR…TKRQ, and FPVT…QQGQ. 6 stretches are compositionally biased toward basic and acidic residues: residues 131–256, 303–351, 365–385, 391–426, 437–485, and 492–643; these read KGEI…KHEQ, EGKE…KAPE, AKKD…EEHP, EKKE…KEET, GKKE…EVKP, and VKKE…KAKE. An N-linked (GlcNAc...) asparagine glycan is attached at N617. A compositionally biased stretch (low complexity) spans 684-701; sequence PGESSGQPSSPGQKQQGQ.

As to quaternary structure, homooligomer of variable subunit number; disulfide-linked. Interacts with CASQ1 and RYR1 in skeletal muscle. Interacts with CASQ2. In terms of processing, phosphorylated by CaMK2. Post-translationally, N-glycosylated. In terms of tissue distribution, detected in heart (at protein level). Skeletal and cardiac muscle.

Its subcellular location is the sarcoplasmic reticulum membrane. Its function is as follows. Contributes to the regulation of lumenal Ca2+ release via the sarcoplasmic reticulum calcium release channels RYR1 and RYR2, a key step in triggering skeletal and heart muscle contraction. Required for normal organization of the triad junction, where T-tubules and the sarcoplasmic reticulum terminal cisternae are in close contact. Required for normal skeletal muscle strength. Plays a role in excitation-contraction coupling in the heart and in regulating the rate of heart beats. The sequence is that of Triadin (TRDN) from Canis lupus familiaris (Dog).